Reading from the N-terminus, the 522-residue chain is Occludin (522 aa).

Residues 1 to 20 (MSSRPLESPPPYRPDEFKPN) are disordered. Residues 1 to 66 (MSSRPLESPP…KWTSPPGVIR (66 aa)) are Cytoplasmic-facing. One can recognise an MARVEL domain in the interval 60–269 (SPPGVIRILS…IIFFAVKTRR (210 aa)). A helical transmembrane segment spans residues 67–89 (ILSMLIIVMCIAIFACVASTLAW). Over 90–135 (DRGYGTSLLGGSVGYPYGGSGFGSYGSGYGYGYGYGYGYGGYTDPR) the chain is Extracellular. A helical transmembrane segment spans residues 136–160 (AAKGFMLAMAAFCFIAALVIFVTSV). Residues 161 to 170 (IRSEMSRTRR) are Cytoplasmic-facing. Residues 171-195 (YYLSVIIVSAILGIMVFIATIVYIM) form a helical membrane-spanning segment. The Extracellular portion of the chain corresponds to 196 to 243 (GVNPTAQSSGSLYGSQIYALCNQFYTPAATGLYVDQYLYHYCVVDPQE). The cysteines at positions 216 and 237 are disulfide-linked. A helical membrane pass occupies residues 244–265 (AIAIVLGFMIIVAFALIIFFAV). The Cytoplasmic segment spans residues 266–522 (KTRRKMDRYD…MVGDYDRQKT (257 aa)). S302 is subject to Phosphoserine. A Phosphothreonine modification is found at T305. Phosphoserine occurs at positions 313, 321, and 340. The segment at 360-407 (VDDFRQPRYSSGGNFETPSKRAPAKGRAGRSKRTEQDHYETDYTTGGE) is disordered. The segment covering 367–376 (RYSSGGNFET) has biased composition (polar residues). Phosphotyrosine is present on Y368. A phosphoserine mark is found at S369 and S370. Positions 381–390 (APAKGRAGRS) are enriched in basic residues. Over residues 391–400 (KRTEQDHYET) the composition is skewed to basic and acidic residues. Phosphotyrosine is present on residues Y398 and Y402. Phosphothreonine; by PKC/PRKCH occurs at positions 403 and 404. The residue at position 408 (S408) is a Phosphoserine. The region spanning 414–522 (EDWIREYPPI…MVGDYDRQKT (109 aa)) is the OCEL domain. The stretch at 426-489 (DQQRQLYKRN…EYNRLKQVKG (64 aa)) forms a coiled coil. S490 is modified (phosphoserine).

The protein belongs to the ELL/occludin family. As to quaternary structure, interacts with TJP1/ZO1. Interacts with VAPA. Interacts with CLDN1, CLDN6, CLDN9, CLDN11, CLDN12 and CLDN17. Interacts with PLSCR1. Interacts with LSR, ILDR1 and ILDR2. Interacts with TJP2/ZO2. Post-translationally, dephosphorylated by PTPRJ. The tyrosine phosphorylation on Tyr-398 and Tyr-402 reduces its ability to interact with TJP1. Phosphorylation at Ser-490 also attenuates the interaction with TJP1. In terms of processing, (Microbial infection) Cleaved by S.pyogenes SpeB protease; leading to its degradation. Degradation by SpeB promotes bacterial translocation across the host epithelial barrier. In terms of tissue distribution, localized at tight junctions of both epithelial and endothelial cells. Highly expressed in kidney. Not detected in testis.

The protein localises to the cell membrane. Its subcellular location is the cell junction. It is found in the tight junction. May play a role in the formation and regulation of the tight junction (TJ) paracellular permeability barrier. It is able to induce adhesion when expressed in cells lacking tight junctions. In terms of biological role, (Microbial infection) Acts as a coreceptor for hepatitis C virus (HCV) in hepatocytes. This chain is Occludin (OCLN), found in Homo sapiens (Human).